Here is a 198-residue protein sequence, read N- to C-terminus: Glycerol-3-phosphate acyltransferase (198 aa).

A run of 4 helical transmembrane segments spans residues 4–24 (TYLLFIVAYLLGSIPFALVVG), 71–91 (LPMIFGLDIHPLWFGLAAVLG), 113–133 (LLCYSPVVFAILAVVFFTLLF), and 147–167 (VVAVIASIVSGDKIFIIAMCL).

The protein belongs to the PlsY family. As to quaternary structure, probably interacts with PlsX.

The protein resides in the cell membrane. The enzyme catalyses an acyl phosphate + sn-glycerol 3-phosphate = a 1-acyl-sn-glycero-3-phosphate + phosphate. It participates in lipid metabolism; phospholipid metabolism. Functionally, catalyzes the transfer of an acyl group from acyl-phosphate (acyl-PO(4)) to glycerol-3-phosphate (G3P) to form lysophosphatidic acid (LPA). This enzyme utilizes acyl-phosphate as fatty acyl donor, but not acyl-CoA or acyl-ACP. The polypeptide is Glycerol-3-phosphate acyltransferase (Bacillus cereus (strain G9842)).